The sequence spans 274 residues: Rhamnulose-1-phosphate aldolase (274 aa).

E117 is an active-site residue. 3 residues coordinate Zn(2+): H141, H143, and H212.

It belongs to the aldolase class II family. RhaD subfamily. In terms of assembly, homotetramer. Zn(2+) serves as cofactor.

Its subcellular location is the cytoplasm. It catalyses the reaction L-rhamnulose 1-phosphate = (S)-lactaldehyde + dihydroxyacetone phosphate. The protein operates within carbohydrate degradation; L-rhamnose degradation; glycerone phosphate from L-rhamnose: step 3/3. In terms of biological role, catalyzes the reversible cleavage of L-rhamnulose-1-phosphate to dihydroxyacetone phosphate (DHAP) and L-lactaldehyde. The protein is Rhamnulose-1-phosphate aldolase of Shigella dysenteriae serotype 1 (strain Sd197).